We begin with the raw amino-acid sequence, 161 residues long: Epoxidase gkaX (161 aa).

Residues 1–18 (MSLSTSLRLLRLLPAISS) form the signal peptide. N45 carries an N-linked (GlcNAc...) asparagine glycan. The next 3 helical transmembrane spans lie at 59-79 (WQWI…LNLV), 92-112 (IWYV…KMAL), and 139-159 (WVRA…AAVS).

It belongs to the epoxidase xenD family.

The protein resides in the membrane. It participates in mycotoxin biosynthesis. Its function is as follows. Epoxidase; part of the gene cluster that mediates the biosynthesis of GKK1032, fungal natural products containing a macrocyclic para-cyclophane connected to a decahydrofluorene ring system that show potent antitumor activities. Within the pathway, gkaX functions synergistically with gkaB and gkaZ to form the cyclophane. The pathway begins with the PKS-NRPS gkaA which, with the help of the trans-enoyl reductase gkaC, synthesizes the polyketide-tyrosyl acyl thioester product which can be reductively off-loaded by the terminal reductase (R) domain in gkaA. The alpha/beta hydrolase gkaG is then required to catalyze the subsequent Knoevenagel condensation that affords the 3-pyrrolin-2-one ring, whereas the three proteins gkaB, gkaX and gkaZ then function synergistically to form the cyclophane. The sequence is that of Epoxidase gkaX from Penicillium citrinum.